A 387-amino-acid chain; its full sequence is Dual-specificity RNA methyltransferase RlmN (387 aa).

Catalysis depends on Glu93, which acts as the Proton acceptor. Residues 99 to 343 enclose the Radical SAM core domain; it reads EENRGTLCIS…TTVRKTRGDD (245 aa). An intrachain disulfide couples Cys106 to Cys348. 3 residues coordinate [4Fe-4S] cluster: Cys113, Cys117, and Cys120. Residues 172–173, Ser204, 226–228, and Asn305 contribute to the S-adenosyl-L-methionine site; these read GE and SLH. The active-site S-methylcysteine intermediate is the Cys348.

It belongs to the radical SAM superfamily. RlmN family. The cofactor is [4Fe-4S] cluster.

The protein resides in the cytoplasm. The catalysed reaction is adenosine(2503) in 23S rRNA + 2 reduced [2Fe-2S]-[ferredoxin] + 2 S-adenosyl-L-methionine = 2-methyladenosine(2503) in 23S rRNA + 5'-deoxyadenosine + L-methionine + 2 oxidized [2Fe-2S]-[ferredoxin] + S-adenosyl-L-homocysteine. It catalyses the reaction adenosine(37) in tRNA + 2 reduced [2Fe-2S]-[ferredoxin] + 2 S-adenosyl-L-methionine = 2-methyladenosine(37) in tRNA + 5'-deoxyadenosine + L-methionine + 2 oxidized [2Fe-2S]-[ferredoxin] + S-adenosyl-L-homocysteine. Functionally, specifically methylates position 2 of adenine 2503 in 23S rRNA and position 2 of adenine 37 in tRNAs. m2A2503 modification seems to play a crucial role in the proofreading step occurring at the peptidyl transferase center and thus would serve to optimize ribosomal fidelity. The protein is Dual-specificity RNA methyltransferase RlmN of Janthinobacterium sp. (strain Marseille) (Minibacterium massiliensis).